We begin with the raw amino-acid sequence, 20 residues long: Thrombin-like enzyme okinaxobin-2 (20 aa).

The Peptidase S1 domain maps to 1–20 (VVGGDECNINEHRFLVALYY).

It belongs to the peptidase S1 family. Snake venom subfamily. In terms of assembly, monomer. Glycosylated. As to expression, expressed by the venom gland.

It localises to the secreted. Its activity is regulated as follows. Strongly inactivated by diisopropylfluorophosphate (DFP) and to a lesser extent by tosyl-L-lysine chloromethyl ketone (TLCK). Its function is as follows. Thrombin-like snake venom serine protease. Releases both fibrinopeptides A and B from fibrinogen (FGA and FGB) to form fibrin clots. This chain is Thrombin-like enzyme okinaxobin-2, found in Ovophis okinavensis (Ryukyu Island pit viper).